We begin with the raw amino-acid sequence, 324 residues long: Ribose 1,5-bisphosphate isomerase (324 aa).

Residues 22-25 (RGAG) and arginine 65 each bind substrate. Cysteine 135 acts as the Proton acceptor in catalysis. A substrate-binding site is contributed by 137–139 (SKA). The active-site Proton donor is the aspartate 204. Residue lysine 240 coordinates substrate.

This sequence belongs to the eIF-2B alpha/beta/delta subunits family. R15P isomerase subfamily.

It catalyses the reaction alpha-D-ribose 1,5-bisphosphate = D-ribulose 1,5-bisphosphate. In terms of biological role, catalyzes the isomerization of ribose 1,5-bisphosphate (R15P) to ribulose 1,5-bisphosphate (RuBP), the CO(2) acceptor and substrate for RubisCO. Functions in an archaeal AMP degradation pathway, together with AMP phosphorylase and RubisCO. The polypeptide is Ribose 1,5-bisphosphate isomerase (Pyrococcus furiosus (strain ATCC 43587 / DSM 3638 / JCM 8422 / Vc1)).